The primary structure comprises 358 residues: 4-hydroxy-3-methylbut-2-en-1-yl diphosphate synthase (flavodoxin) (358 aa).

[4Fe-4S] cluster contacts are provided by C270, C273, C305, and E312.

It belongs to the IspG family. It depends on [4Fe-4S] cluster as a cofactor.

It carries out the reaction (2E)-4-hydroxy-3-methylbut-2-enyl diphosphate + oxidized [flavodoxin] + H2O + 2 H(+) = 2-C-methyl-D-erythritol 2,4-cyclic diphosphate + reduced [flavodoxin]. Its pathway is isoprenoid biosynthesis; isopentenyl diphosphate biosynthesis via DXP pathway; isopentenyl diphosphate from 1-deoxy-D-xylulose 5-phosphate: step 5/6. Its function is as follows. Converts 2C-methyl-D-erythritol 2,4-cyclodiphosphate (ME-2,4cPP) into 1-hydroxy-2-methyl-2-(E)-butenyl 4-diphosphate. This Vesicomyosocius okutanii subsp. Calyptogena okutanii (strain HA) protein is 4-hydroxy-3-methylbut-2-en-1-yl diphosphate synthase (flavodoxin).